A 650-amino-acid polypeptide reads, in one-letter code: MSKHTHSFQAEVAQLLHLVTHSLYSNKEIFLRELVSNASDACDKLRFEALNNAALYEDAPNLEVRVSFDKEARTLTITDNGIGMSEQEAIDHLGTIAKSGTRDFMNRLSGDQKADAQLIGQFGVGFYSGFIVADRITVESRRAGLPASEGVRWASGGAGDFEVEAIERAARGTSVILHLREDAEEFLNAWKIKQVIGKYSDHISLPILMEKEEWKESEKEGEPGQMVKTGEWETVNKASALWTRPKKDITDEQYQDFYKSISHDFENPLTWSHNRVEGNTEYTQLLYIPAKAPFDLWNRDKKAGVKLYVKRVFIMDDAESLMPSYLRFVKGVIDSADLPLNVSRELLQESRDVRLIRDGSVKRVLSMLEDLAKHDKHEAAAEGADGVQDVVSAEDKAKEGKYTQFYAEFGAVLKEGLGEDFANRERLAKLLRFASTTSDTPSVSFADYKARMKEGQEAIYYITADTLAAAKNSPQLEVFKKKGIEVLLMTDRVDEWALNYLQDFDGTPLQSVAKGAVDLGKLQDEAEKKAAEEAAEAFKPMLAKLKEALKDKAEDVRVTTRLVDSPACLVVQDGGMSTQLARLLKQAGQSAPDAKPVLEVNPEHALVKKLDGSVHFHDLAHILFDQALLAEGGLPEDPAAYVKRVNALLA.

The interval 1–344 (MSKHTHSFQA…SADLPLNVSR (344 aa)) is a; substrate-binding. Residues 345 to 582 (ELLQESRDVR…DGGMSTQLAR (238 aa)) are b. The segment at 583-650 (LLKQAGQSAP…YVKRVNALLA (68 aa)) is c.

The protein belongs to the heat shock protein 90 family. As to quaternary structure, homodimer.

It localises to the cytoplasm. Functionally, molecular chaperone. Has ATPase activity. The polypeptide is Chaperone protein HtpG (Acidovorax sp. (strain JS42)).